The following is a 158-amino-acid chain: Small ribosomal subunit protein uS7 (158 aa).

This sequence belongs to the universal ribosomal protein uS7 family. In terms of assembly, part of the 30S ribosomal subunit. Contacts proteins S9 and S11.

Its function is as follows. One of the primary rRNA binding proteins, it binds directly to 16S rRNA where it nucleates assembly of the head domain of the 30S subunit. Is located at the subunit interface close to the decoding center, probably blocks exit of the E-site tRNA. The polypeptide is Small ribosomal subunit protein uS7 (Bacteroides fragilis (strain YCH46)).